The primary structure comprises 138 residues: Large ribosomal subunit protein uL16 (138 aa).

Residues 1-17 (MLIPRKVKHRKQHHPRQ) are compositionally biased toward basic residues. Residues 1-23 (MLIPRKVKHRKQHHPRQRGIASG) form a disordered region.

Belongs to the universal ribosomal protein uL16 family. Part of the 50S ribosomal subunit.

Binds 23S rRNA and is also seen to make contacts with the A and possibly P site tRNAs. The chain is Large ribosomal subunit protein uL16 from Mycobacterium sp. (strain JLS).